Reading from the N-terminus, the 619-residue chain is Glucokinase regulatory protein (619 aa).

2 SIS domains span residues 90 to 283 and 319 to 498; these read VQEV…AESN and TATS…LRGK. 107 to 109 contacts keto-D-fructose 6-phosphate; it reads CGT. Beta-D-fructose 1-phosphate contacts are provided by residues 109–110, glutamate 153, 179–181, and glutamate 347; these read TS and SCG. Residues 179-183 and glutamate 347 each bind keto-D-fructose 6-phosphate; that span reads SCGLS. The segment at 462 to 464 is essential for interaction with GCK; the sequence is ILF. Lysine 513 provides a ligand contact to keto-D-fructose 6-phosphate. Lysine 513 provides a ligand contact to beta-D-fructose 1-phosphate.

It belongs to the GCKR family. Interacts (fructose 6-phosphate bound form) with gck.

The protein localises to the nucleus. Its subcellular location is the cytoplasm. It is found in the mitochondrion. Regulates glucokinase (gck) by forming an inactive complex with this enzyme. The affinity of gckr for gck is modulated by fructose metabolites: gckr with bound fructose 6-phosphate has increased affinity for gck, while gckr with bound fructose 1-phosphate has strongly decreased affinity for gck and does not inhibit gck activity. The chain is Glucokinase regulatory protein from Xenopus laevis (African clawed frog).